The sequence spans 463 residues: Quinolone resistance protein NorB (463 aa).

14 helical membrane-spanning segments follow: residues 17-37 (IGIV…VNVV), 53-73 (IAVS…GGLA), 86-106 (IILN…LLLI), 107-127 (IGRL…LSII), 142-162 (YWSI…GAVA), 165-185 (LGWR…LFLI), 201-221 (FDIK…ILIT), 230-250 (SLLF…FIVL), 273-293 (TASN…NTFV), 299-319 (YSSL…LIMI), 334-354 (PMLI…LTFL), 357-377 (ILYV…LGIY), 403-423 (MASA…YAIV), and 435-455 (IALW…LLLV).

Belongs to the major facilitator superfamily. TCR/Tet family.

It localises to the cell membrane. In terms of biological role, multidrug efflux pump that acts independently of NorA and is one of the factors that confers resistance against diverse quinolones and chemical compounds. Can facilitate bacterial survival in vivo when overexpressed in an abscess and may contribute to the relative resistance of staphylococcal abscesses to antimicrobial therapy. The polypeptide is Quinolone resistance protein NorB (norB) (Staphylococcus aureus (strain MW2)).